We begin with the raw amino-acid sequence, 142 residues long: Hemoglobin subunit alpha-1 (142 aa).

In terms of domain architecture, Globin spans 2–142 (VLSPADKTNI…VSTVLTSKYR (141 aa)). His-59 contacts O2. Residue His-88 coordinates heme b.

It belongs to the globin family. In terms of assembly, heterotetramer of two alpha chains and two beta chains. As to expression, red blood cells.

Its function is as follows. Involved in oxygen transport from the lung to the various peripheral tissues. The protein is Hemoglobin subunit alpha-1 of Arctocephalus galapagoensis (Galapagoes fur seal).